Here is a 188-residue protein sequence, read N- to C-terminus: Methylated-DNA--protein-cysteine methyltransferase (188 aa).

Y120, G121, and R134 together coordinate DNA. The active-site Nucleophile; methyl group acceptor is the C151. S157 contributes to the DNA binding site.

It belongs to the MGMT family.

Its subcellular location is the nucleus. The catalysed reaction is a 6-O-methyl-2'-deoxyguanosine in DNA + L-cysteinyl-[protein] = S-methyl-L-cysteinyl-[protein] + a 2'-deoxyguanosine in DNA. The enzyme catalyses a 4-O-methyl-thymidine in DNA + L-cysteinyl-[protein] = a thymidine in DNA + S-methyl-L-cysteinyl-[protein]. In terms of biological role, involved in the cellular defense against the biological effects of O6-methylguanine (O6-MeG) and O4-methylthymine (O4-MeT) in DNA. Repairs the methylated nucleobase in DNA by stoichiometrically transferring the methyl group to a cysteine residue in the enzyme. This is a suicide reaction: the enzyme is irreversibly inactivated. Prefers double-stranded DNA over single-stranded DNA as substrate. The sequence is that of Methylated-DNA--protein-cysteine methyltransferase (MGT1) from Saccharomyces cerevisiae (strain ATCC 204508 / S288c) (Baker's yeast).